Here is a 367-residue protein sequence, read N- to C-terminus: 15-cis-zeta-carotene isomerase, chloroplastic (367 aa).

The N-terminal 58 residues, 1-58 (MAVYHLLLSSPPSLLLLPPSPRRPNLTLIRRIPAHPRLGNSTSLLSSSSPVIRKILVR), are a transit peptide targeting the chloroplast. 6 helical membrane-spanning segments follow: residues 95 to 115 (SWVYFGVVLGVVLFILNVVWI), 137 to 157 (EVAMLMLILIFAIVHSGLASL), 172 to 192 (VLFAGISLPLAMSTIVYFINH), 211 to 231 (AIWVANFVSFFFLYPSTFNLL), 269 to 289 (LWIGNTVAASASLGLIAHHLF), and 339 to 359 (LPYLAITALTVGAYFAHPLMQ).

As to expression, expressed in leaves and at lower levels in roots.

It is found in the plastid. The protein localises to the chloroplast membrane. The catalysed reaction is 9,9',15-tri-cis-zeta-carotene = 9,9'-di-cis-zeta-carotene. In terms of biological role, isomerase involved in the biosynthesis of carotenoids. Catalyzes the cis- to trans-conversion of the 15-cis-bond in 9,15,9'-tri-cis-zeta-carotene. The sequence is that of 15-cis-zeta-carotene isomerase, chloroplastic (Z-ISO) from Arabidopsis thaliana (Mouse-ear cress).